The following is a 244-amino-acid chain: tRNA (guanine-N(1)-)-methyltransferase (244 aa).

S-adenosyl-L-methionine-binding positions include glycine 113 and 133 to 138; that span reads IGDYVL.

The protein belongs to the RNA methyltransferase TrmD family. As to quaternary structure, homodimer.

The protein resides in the cytoplasm. The catalysed reaction is guanosine(37) in tRNA + S-adenosyl-L-methionine = N(1)-methylguanosine(37) in tRNA + S-adenosyl-L-homocysteine + H(+). Specifically methylates guanosine-37 in various tRNAs. This chain is tRNA (guanine-N(1)-)-methyltransferase, found in Bacillus cereus (strain G9842).